The chain runs to 276 residues: D-aminoacyl-tRNA deacylase (276 aa).

It belongs to the DtdA deacylase family. In terms of assembly, monomer. It depends on Zn(2+) as a cofactor.

It carries out the reaction a D-aminoacyl-tRNA + H2O = a tRNA + a D-alpha-amino acid + H(+). The enzyme catalyses glycyl-tRNA(Ala) + H2O = tRNA(Ala) + glycine + H(+). In terms of biological role, D-aminoacyl-tRNA deacylase with broad substrate specificity. By recycling D-aminoacyl-tRNA to D-amino acids and free tRNA molecules, this enzyme counteracts the toxicity associated with the formation of D-aminoacyl-tRNA entities in vivo. This Korarchaeum cryptofilum (strain OPF8) protein is D-aminoacyl-tRNA deacylase.